A 195-amino-acid polypeptide reads, in one-letter code: Imidazoleglycerol-phosphate dehydratase (195 aa).

Belongs to the imidazoleglycerol-phosphate dehydratase family.

The protein resides in the cytoplasm. The catalysed reaction is D-erythro-1-(imidazol-4-yl)glycerol 3-phosphate = 3-(imidazol-4-yl)-2-oxopropyl phosphate + H2O. It participates in amino-acid biosynthesis; L-histidine biosynthesis; L-histidine from 5-phospho-alpha-D-ribose 1-diphosphate: step 6/9. This chain is Imidazoleglycerol-phosphate dehydratase, found in Paraburkholderia phytofirmans (strain DSM 17436 / LMG 22146 / PsJN) (Burkholderia phytofirmans).